Consider the following 403-residue polypeptide: ESX-5 secretion system protein EccE5 (403 aa).

The next 2 membrane-spanning stretches (helical) occupy residues 9 to 29 (LALS…ILIV) and 43 to 63 (IAWW…VVTY).

It belongs to the EccE family. As to quaternary structure, part of the ESX-5 / type VII secretion system (T7SS), which is composed of cytosolic and membrane components. The ESX-5 membrane complex is composed of EccB5, EccC5, EccD5 and EccE5.

It localises to the cell inner membrane. Functionally, part of the ESX-5 specialized secretion system, which is responsible for the secretion of EsxN and a number of PE_PGRS and PPE proteins. The polypeptide is ESX-5 secretion system protein EccE5 (Mycobacterium marinum (strain ATCC BAA-535 / M)).